The chain runs to 336 residues: Acetaldehyde dehydrogenase 1 (336 aa).

32–35 (SGVV) provides a ligand contact to NAD(+). Cys150 functions as the Acyl-thioester intermediate in the catalytic mechanism. Asn309 provides a ligand contact to NAD(+).

It belongs to the acetaldehyde dehydrogenase family.

The catalysed reaction is acetaldehyde + NAD(+) + CoA = acetyl-CoA + NADH + H(+). The protein is Acetaldehyde dehydrogenase 1 (mhpF) of Mycobacterium ulcerans (strain Agy99).